The chain runs to 225 residues: Ribonuclease 3 (225 aa).

The RNase III domain occupies 7-129; sequence IPRLCRTLGY…IIGAIYLDSD (123 aa). Glu42 serves as a coordination point for Mg(2+). Asp46 is an active-site residue. 2 residues coordinate Mg(2+): Asp115 and Glu118. The active site involves Glu118. In terms of domain architecture, DRBM spans 155 to 225; that stretch reads DPKTLLQEYL…AAQVLELIKK (71 aa).

The protein belongs to the ribonuclease III family. Homodimer. Mg(2+) serves as cofactor.

The protein resides in the cytoplasm. The enzyme catalyses Endonucleolytic cleavage to 5'-phosphomonoester.. Digests double-stranded RNA. Involved in the processing of primary rRNA transcript to yield the immediate precursors to the large and small rRNAs (23S and 16S). Processes some mRNAs, and tRNAs when they are encoded in the rRNA operon. Processes pre-crRNA and tracrRNA of type II CRISPR loci if present in the organism. The chain is Ribonuclease 3 from Shewanella pealeana (strain ATCC 700345 / ANG-SQ1).